Here is a 556-residue protein sequence, read N- to C-terminus: Formate--tetrahydrofolate ligase (556 aa).

65-72 (TPAGEGKS) is a binding site for ATP.

Belongs to the formate--tetrahydrofolate ligase family.

It catalyses the reaction (6S)-5,6,7,8-tetrahydrofolate + formate + ATP = (6R)-10-formyltetrahydrofolate + ADP + phosphate. It participates in one-carbon metabolism; tetrahydrofolate interconversion. The sequence is that of Formate--tetrahydrofolate ligase from Clostridium beijerinckii (strain ATCC 51743 / NCIMB 8052) (Clostridium acetobutylicum).